The chain runs to 58 residues: Sec-independent protein translocase protein TatA (58 aa).

The chain crosses the membrane as a helical span at residues 1–21; sequence MLSNIGFPGLILILVAILILF.

This sequence belongs to the TatA/E family. In terms of assembly, forms a complex with TatC.

The protein resides in the cell membrane. In terms of biological role, part of the twin-arginine translocation (Tat) system that transports large folded proteins containing a characteristic twin-arginine motif in their signal peptide across membranes. TatA could form the protein-conducting channel of the Tat system. The sequence is that of Sec-independent protein translocase protein TatA from Bacillus cytotoxicus (strain DSM 22905 / CIP 110041 / 391-98 / NVH 391-98).